Reading from the N-terminus, the 715-residue chain is NADH-ubiquinone oxidoreductase chain 5 (715 aa).

Transmembrane regions (helical) follow at residues methionine 1 to arginine 21, leucine 30 to valine 50, leucine 81 to isoleucine 101, leucine 119 to glycine 139, tryptophan 140 to alanine 160, phenylalanine 177 to valine 197, leucine 200 to alanine 220, threonine 241 to methionine 261, leucine 274 to phenylalanine 294, leucine 310 to isoleucine 330, asparagine 331 to alanine 351, leucine 366 to methionine 386, phenylalanine 403 to leucine 423, glycine 487 to isoleucine 507, threonine 543 to leucine 563, isoleucine 647 to isoleucine 667, and serine 668 to threonine 688.

It belongs to the complex I subunit 5 family.

It is found in the mitochondrion inner membrane. The catalysed reaction is a ubiquinone + NADH + 5 H(+)(in) = a ubiquinol + NAD(+) + 4 H(+)(out). Its function is as follows. Core subunit of the mitochondrial membrane respiratory chain NADH dehydrogenase (Complex I) that is believed to belong to the minimal assembly required for catalysis. Complex I functions in the transfer of electrons from NADH to the respiratory chain. The immediate electron acceptor for the enzyme is believed to be ubiquinone. The chain is NADH-ubiquinone oxidoreductase chain 5 (ndh-5) from Neurospora crassa (strain ATCC 24698 / 74-OR23-1A / CBS 708.71 / DSM 1257 / FGSC 987).